A 254-amino-acid chain; its full sequence is Coproheme decarboxylase (254 aa).

Fe-coproporphyrin III contacts are provided by residues Arg136, 150–154 (YPMDK), His177, Gln190, and Ser228. The active site involves Tyr150.

Belongs to the ChdC family. Type 1 subfamily. Fe-coproporphyrin III is required as a cofactor.

It carries out the reaction Fe-coproporphyrin III + 2 H2O2 + 2 H(+) = heme b + 2 CO2 + 4 H2O. It catalyses the reaction Fe-coproporphyrin III + H2O2 + H(+) = harderoheme III + CO2 + 2 H2O. The enzyme catalyses harderoheme III + H2O2 + H(+) = heme b + CO2 + 2 H2O. Its pathway is porphyrin-containing compound metabolism; protoheme biosynthesis. Involved in coproporphyrin-dependent heme b biosynthesis. Catalyzes the decarboxylation of Fe-coproporphyrin III (coproheme) to heme b (protoheme IX), the last step of the pathway. The reaction occurs in a stepwise manner with a three-propionate harderoheme intermediate. This chain is Coproheme decarboxylase, found in Bacillus subtilis (strain 168).